Here is a 271-residue protein sequence, read N- to C-terminus: Ubiquitin thioesterase OTUB1 (271 aa).

Ala-2 is modified (N-acetylalanine). Ser-16 carries the phosphoserine modification. Tyr-26 bears the Phosphotyrosine; by SRC mark. The OTU domain occupies 80-271 (SYIRKTRPDG…RPGHYDILYK (192 aa)). Residue Asp-88 is part of the active site. Cys-91 acts as the Nucleophile in catalysis. 2 ubiquitin-conjugating enzyme E2 binding regions span residues 130 to 138 (FTEFTIEDF) and 169 to 177 (DYLVVYLRL). The segment at 189-195 (FFEHFIE) is free ubiquitin binding. A ubiquitin-conjugating enzyme E2 binding region spans residues 206–213 (QEVEPMCK). Free ubiquitin binding stretches follow at residues 214-221 (ESDHIHII) and 245-251 (NPHIFPE). His-265 is a catalytic residue.

The protein belongs to the peptidase C65 family. In terms of assembly, interacts with FUS and RACK1. Interacts with UBE2D1/UBCH5A, UBE2W/UBC16 and UBE2N/UBC13. As to quaternary structure, interacts with RNF128. Forms a ternary complex with RNF128 and USP8. Interacts with the C-terminal UCH catalytic domain of USP8. Interacts with RNF128. Does not associate with USP8. In terms of processing, phosphorylation at Tyr-26 by SRC and SRMS promotes deubiquitination of RPTOR via a non-catalytic process. Isoform 1 is ubiquitous. Isoform 2 is expressed only in lymphoid tissues such as tonsils, lymph nodes and spleen, as well as peripheral blood mononuclear cells.

The protein localises to the cytoplasm. The enzyme catalyses Thiol-dependent hydrolysis of ester, thioester, amide, peptide and isopeptide bonds formed by the C-terminal Gly of ubiquitin (a 76-residue protein attached to proteins as an intracellular targeting signal).. Its activity is regulated as follows. By free ubiquitin: binding of free ubiquitin triggers conformational changes in the OTU domain and formation of a ubiquitin-binding helix in the N-terminus, promoting binding of the conjugated donor ubiquitin in UBE2N/UBC13 to OTUB1. Hydrolase that can specifically remove 'Lys-48'-linked conjugated ubiquitin from proteins and plays an important regulatory role at the level of protein turnover by preventing degradation. Regulator of T-cell anergy, a phenomenon that occurs when T-cells are rendered unresponsive to antigen rechallenge and no longer respond to their cognate antigen. Acts via its interaction with RNF128/GRAIL, a crucial inductor of CD4 T-cell anergy. Isoform 1 destabilizes RNF128, leading to prevent anergy. In contrast, isoform 2 stabilizes RNF128 and promotes anergy. Surprisingly, it regulates RNF128-mediated ubiquitination, but does not deubiquitinate polyubiquitinated RNF128. Deubiquitinates estrogen receptor alpha (ESR1). Mediates deubiquitination of 'Lys-48'-linked polyubiquitin chains, but not 'Lys-63'-linked polyubiquitin chains. Not able to cleave di-ubiquitin. Also capable of removing NEDD8 from NEDD8 conjugates, but with a much lower preference compared to 'Lys-48'-linked ubiquitin. In terms of biological role, plays a key non-catalytic role in DNA repair regulation by inhibiting activity of RNF168, an E3 ubiquitin-protein ligase that promotes accumulation of 'Lys-63'-linked histone H2A and H2AX at DNA damage sites. Inhibits RNF168 independently of ubiquitin thioesterase activity by binding and inhibiting UBE2N/UBC13, the E2 partner of RNF168, thereby limiting spreading of 'Lys-63'-linked histone H2A and H2AX marks. Inhibition occurs by binding to free ubiquitin: free ubiquitin acts as an allosteric regulator that increases affinity for UBE2N/UBC13 and disrupts interaction with UBE2V1. The OTUB1-UBE2N/UBC13-free ubiquitin complex adopts a configuration that mimics a cleaved 'Lys48'-linked di-ubiquitin chain. Acts as a regulator of mTORC1 and mTORC2 complexes. When phosphorylated at Tyr-26, acts as an activator of the mTORC1 complex by mediating deubiquitination of RPTOR via a non-catalytic process: acts by binding and inhibiting the activity of the ubiquitin-conjugating enzyme E2 (UBE2D1/UBCH5A, UBE2W/UBC16 and UBE2N/UBC13), thereby preventing ubiquitination of RPTOR. Can also act as an inhibitor of the mTORC1 and mTORC2 complexes in response to amino acids by mediating non-catalytic deubiquitination of DEPTOR. In Homo sapiens (Human), this protein is Ubiquitin thioesterase OTUB1 (OTUB1).